We begin with the raw amino-acid sequence, 254 residues long: Large ribosomal subunit protein uL2B (254 aa).

Lys-46 participates in a covalent cross-link: Glycyl lysine isopeptide (Lys-Gly) (interchain with G-Cter in ubiquitin). Ser-52 carries the phosphoserine modification. Lys-93 participates in a covalent cross-link: Glycyl lysine isopeptide (Lys-Gly) (interchain with G-Cter in ubiquitin). Position 95 is a phosphoserine (Ser-95). Glycyl lysine isopeptide (Lys-Gly) (interchain with G-Cter in ubiquitin) cross-links involve residues Lys-119 and Lys-145. Phosphoserine is present on residues Ser-159, Ser-160, and Ser-249.

Belongs to the universal ribosomal protein uL2 family. In terms of assembly, component of the large ribosomal subunit (LSU). Mature yeast ribosomes consist of a small (40S) and a large (60S) subunit. The 40S small subunit contains 1 molecule of ribosomal RNA (18S rRNA) and 33 different proteins (encoded by 57 genes). The large 60S subunit contains 3 rRNA molecules (25S, 5.8S and 5S rRNA) and 46 different proteins (encoded by 81 genes).

The protein localises to the cytoplasm. Component of the ribosome, a large ribonucleoprotein complex responsible for the synthesis of proteins in the cell. The small ribosomal subunit (SSU) binds messenger RNAs (mRNAs) and translates the encoded message by selecting cognate aminoacyl-transfer RNA (tRNA) molecules. The large subunit (LSU) contains the ribosomal catalytic site termed the peptidyl transferase center (PTC), which catalyzes the formation of peptide bonds, thereby polymerizing the amino acids delivered by tRNAs into a polypeptide chain. The nascent polypeptides leave the ribosome through a tunnel in the LSU and interact with protein factors that function in enzymatic processing, targeting, and the membrane insertion of nascent chains at the exit of the ribosomal tunnel. The protein is Large ribosomal subunit protein uL2B of Saccharomyces cerevisiae (strain ATCC 204508 / S288c) (Baker's yeast).